Here is a 550-residue protein sequence, read N- to C-terminus: Arginine--tRNA ligase (550 aa).

Positions Ala-130 to Gly-140 match the 'HIGH' region motif.

Belongs to the class-I aminoacyl-tRNA synthetase family. In terms of assembly, monomer.

It is found in the cytoplasm. The catalysed reaction is tRNA(Arg) + L-arginine + ATP = L-arginyl-tRNA(Arg) + AMP + diphosphate. This Mycolicibacterium smegmatis (strain ATCC 700084 / mc(2)155) (Mycobacterium smegmatis) protein is Arginine--tRNA ligase (argS).